The primary structure comprises 253 residues: Chitooligosaccharide deacetylase (253 aa).

Mg(2+) contacts are provided by His-61 and His-126.

Belongs to the YdjC deacetylase family. ChbG subfamily. Homodimer. The cofactor is Mg(2+).

It localises to the cytoplasm. The catalysed reaction is N,N'-diacetylchitobiose + H2O = N-acetyl-beta-D-glucosaminyl-(1-&gt;4)-D-glucosamine + acetate. It catalyses the reaction diacetylchitobiose-6'-phosphate + H2O = N'-monoacetylchitobiose-6'-phosphate + acetate. It participates in glycan degradation; chitin degradation. Involved in the degradation of chitin. ChbG is essential for growth on the acetylated chitooligosaccharides chitobiose and chitotriose but is dispensable for growth on cellobiose and chitosan dimer, the deacetylated form of chitobiose. Deacetylation of chitobiose-6-P and chitotriose-6-P is necessary for both the activation of the chb promoter by the regulatory protein ChbR and the hydrolysis of phosphorylated beta-glucosides by the phospho-beta-glucosidase ChbF. Catalyzes the removal of only one acetyl group from chitobiose-6-P to yield monoacetylchitobiose-6-P, the inducer of ChbR and the substrate of ChbF. In Yersinia pestis bv. Antiqua (strain Angola), this protein is Chitooligosaccharide deacetylase.